Consider the following 118-residue polypeptide: Large ribosomal subunit protein uL18 (118 aa).

The interval 1 to 25 (MISKPDKNKIRQKRHRRVRGKLSGT) is disordered. A compositionally biased stretch (basic residues) spans 10–20 (IRQKRHRRVRG).

The protein belongs to the universal ribosomal protein uL18 family. Part of the 50S ribosomal subunit; part of the 5S rRNA/L5/L18/L25 subcomplex. Contacts the 5S and 23S rRNAs.

In terms of biological role, this is one of the proteins that bind and probably mediate the attachment of the 5S RNA into the large ribosomal subunit, where it forms part of the central protuberance. The sequence is that of Large ribosomal subunit protein uL18 from Streptococcus pyogenes serotype M5 (strain Manfredo).